A 67-amino-acid chain; its full sequence is Protein AaeX (67 aa).

The next 2 membrane-spanning stretches (helical) occupy residues 9-29 and 47-67; these read IFGL…ALFF and PALF…CLFV.

This sequence belongs to the AaeX family.

It localises to the cell membrane. In Serratia marcescens, this protein is Protein AaeX.